Reading from the N-terminus, the 6919-residue chain is Nonribosomal peptide synthetase easA (6919 aa).

The Carrier 1 domain occupies 17-93; it reads TNNEVVEKDI…ELCQSVKLAE (77 aa). Position 54 is an O-(pantetheine 4'-phosphoryl)serine (Ser54). The epimerization 1 stretch occupies residues 123–427; sequence EAQKLYASTK…FLRKVKDTRM (305 aa). The disordered stretch occupies residues 294-319; that stretch reads FRRSTPVESTNDERNTNERQHNRHQN. Positions 304–319 are enriched in basic and acidic residues; the sequence is NDERNTNERQHNRHQN. The condensation 1 stretch occupies residues 604-981; the sequence is LNVELDCGRL…ISTTQEINQL (378 aa). The segment at 1003–1394 is adenylation 1; it reads QRLRRPDAWA…GRRDTQIKVR (392 aa). The region spanning 1531 to 1608 is the Carrier 2 domain; that stretch reads EPETLLERQV…QLAQTAEVKD (78 aa). An O-(pantetheine 4'-phosphoryl)serine modification is found at Ser1569. Residues 1617 to 2031 form an epimerization 2 region; it reads LLSPMQKWYF…ANAISALGTE (415 aa). The interval 2072–2509 is condensation 2; the sequence is VEDIYPCSPI…VGQLNTVTPK (438 aa). Residues 2541–2930 form an adenylation 2 region; that stretch reads RPNATAVCAW…ARKDSQVKVR (390 aa). The region spanning 3067-3143 is the Carrier 3 domain; the sequence is APSTFMEKKL…EMAAHLEAQM (77 aa). At Ser3104 the chain carries O-(pantetheine 4'-phosphoryl)serine. A condensation 3 region spans residues 3188-3599; sequence EDVYPCTPLQ…LLSKDEARRL (412 aa). The segment at 3620–4018 is adenylation 3; sequence QHVSTNPYAP…GRRDGQVKIR (399 aa). Positions 4151–4228 constitute a Carrier 4 domain; sequence TPSTSEEKNI…QLAKKAVIKT (78 aa). The residue at position 4188 (Ser4188) is an O-(pantetheine 4'-phosphoryl)serine. A condensation 4 region spans residues 4282 to 4708; sequence ESIYYCSPIQ…EIDVIPTGDV (427 aa). The interval 4732 to 5133 is adenylation 4; that stretch reads EQALSQPGAQ…GRADGQIKIR (402 aa). Positions 5260–5337 constitute a Carrier 5 domain; that stretch reads ALSTETERRL…DMANTIANSE (78 aa). At Ser5296 the chain carries O-(pantetheine 4'-phosphoryl)serine. The condensation 5 stretch occupies residues 5380 to 5775; it reads EDAYPCTPLQ…VFGQLQSAAN (396 aa). Residues 5824-6216 form an adenylation 5 region; it reads SCPDAQAVHA…IGRRDTQVKI (393 aa). The Carrier 6 domain maps to 6344–6421; that stretch reads EPATVTERLL…DMATLIDRKT (78 aa). Ser6381 carries the O-(pantetheine 4'-phosphoryl)serine modification.

It participates in antibiotic biosynthesis. In terms of biological role, nonribosomal peptide synthetase; part of the gene cluster that mediates the biosynthesis of emericellamides, secondary metabolites acting as antibiotics. The biosynthesis of emericellamides initiates from the highly reducing polyketide synthase easB which catalyzes the formation of the linear polyketide chain. EasB produces several polyketides that can be further processed by the downstream enzymes. The polyketides are released from easB as linear polyketide carboxylic acids, which are converted to CoA thioesters by the acyl-CoA ligase easD. The substrates are then loaded onto the acyltransferase easC, which shuttles them to the first thiolation (T) domain of the nonribosomal peptide synthetase easA. EasA then performs condensation of the polyketides with one glycine, two alanine, one valine and one leucine residues. A last step of cyclization leads to the production of emericellamides. The polypeptide is Nonribosomal peptide synthetase easA (Emericella nidulans (strain FGSC A4 / ATCC 38163 / CBS 112.46 / NRRL 194 / M139) (Aspergillus nidulans)).